The sequence spans 690 residues: Crooked neck-like protein 1 (690 aa).

16 HAT repeats span residues 61-93, 95-127, 129-161, 163-194, 196-227, 229-264, 266-300, 310-342, 344-378, 388-424, 459-491, 493-527, 529-560, 565-606, 608-646, and 648-673; these read DYKLRKRKTFEDNIRKNRTVISNWIKYAQWEES, KEIQRARSIYERALDVDYRNITLWLKYAEMEMK, RQVNHARNIWDRAITTLPRVNQFWYKYTYMEEM, GNVAGARQVFERWMEWQPEEQAWHSYINFELR, KEVERARTIYERFVLVHPAVKNWIKYARFEEK, AYFAHARKVYERAVEFFGDEHMDEHLYVAFAKFEEN, KEFERVRVIYKYALDRISKQEAQELFKNYTIFEKK, IIVSKRRFQYEEEVKANPHNYDAWFDYLRLVES, AEADTVREVYERAIANVPPIQEKRHWKRYIYLWVN, KDPERTRQVYQASLELIPHKKFTFAKMWLYYAQFEIR, REFDRCRKLYEKFLEFGPENCTSWIKFAELETI, GDIERARAIYELAISQPRLDMPEVLWKSYIDFEIE, EETERTRNLYRQLLQRTQHVKVWISFAQFELS, GSVA…EFGT, SDKERVDKLMPEKVKKRRKVQADDGSDAGWEEYYDYIFP, and DAANQPNLKLLAMAKLWKKQQQEREA. The interval 250–467 is mediates interaction with HSP90; that stretch reads MDEHLYVAFA…LREFDRCRKL (218 aa). At Ser-342 the chain carries Phosphoserine. The Nuclear localization signal motif lies at 618-626; it reads PEKVKKRRK. Basic and acidic residues predominate over residues 667-679; the sequence is QQQEREAAEQDPD. The segment at 667–690 is disordered; it reads QQQEREAAEQDPDKDIDESESSSF. Positions 680 to 690 are enriched in acidic residues; it reads KDIDESESSSF. The residue at position 689 (Ser-689) is a Phosphoserine.

The protein belongs to the crooked-neck family. Identified in the spliceosome C complex. Present in a spliceosome complex assembled in vitro containing CRNKL1, HPRP8BP and SNRPB2. Component of the minor spliceosome, which splices U12-type introns. Interacts with PPIL2 (via the PPIase cyclophilin-type domain); they may form a trimeric complex with HSP90.

The protein localises to the nucleus. The protein resides in the nucleus speckle. In terms of biological role, involved in pre-mRNA splicing process. As a component of the minor spliceosome, involved in the splicing of U12-type introns in pre-mRNAs. In Mus musculus (Mouse), this protein is Crooked neck-like protein 1 (Crnkl1).